The chain runs to 285 residues: 2,3,4,5-tetrahydropyridine-2,6-dicarboxylate N-succinyltransferase (285 aa).

Positions 111 and 148 each coordinate substrate.

This sequence belongs to the transferase hexapeptide repeat family. Homotrimer.

It is found in the cytoplasm. The catalysed reaction is (S)-2,3,4,5-tetrahydrodipicolinate + succinyl-CoA + H2O = (S)-2-succinylamino-6-oxoheptanedioate + CoA. Its pathway is amino-acid biosynthesis; L-lysine biosynthesis via DAP pathway; LL-2,6-diaminopimelate from (S)-tetrahydrodipicolinate (succinylase route): step 1/3. The polypeptide is 2,3,4,5-tetrahydropyridine-2,6-dicarboxylate N-succinyltransferase (Sinorhizobium medicae (strain WSM419) (Ensifer medicae)).